The chain runs to 611 residues: UvrABC system protein C (611 aa).

The 79-residue stretch at 6–84 (NNPGVYRMFN…IKRSRPRFNV (79 aa)) folds into the GIY-YIG domain. In terms of domain architecture, UVR spans 194–229 (QSVKDHLAAAMQAASADLDFEHAAVYRDRLAALSHV).

This sequence belongs to the UvrC family. In terms of assembly, interacts with UvrB in an incision complex.

Its subcellular location is the cytoplasm. In terms of biological role, the UvrABC repair system catalyzes the recognition and processing of DNA lesions. UvrC both incises the 5' and 3' sides of the lesion. The N-terminal half is responsible for the 3' incision and the C-terminal half is responsible for the 5' incision. The chain is UvrABC system protein C from Brucella suis biovar 1 (strain 1330).